A 1462-amino-acid chain; its full sequence is Tyrosine-protein phosphatase 69D (1462 aa).

A signal peptide spans 1–28; it reads MALLYRRMSMLLNIILAYIFLCAICVQG. 2 Ig-like C2-type domains span residues 29–125 and 131–230; these read SVKQ…TEFQ and PSKV…KEIT. At 29–805 the chain is on the extracellular side; sequence SVKQEWAEIG…MDYYLSIGVK (777 aa). N-linked (GlcNAc...) asparagine glycosylation is found at N40, N58, N64, N85, N109, N119, N162, N191, N196, N209, N255, N288, N302, N429, N442, N451, N516, N613, N701, and N755. C45 and C112 are disulfide-bonded. C154 and C214 are disulfide-bonded. Fibronectin type-III domains follow at residues 237 to 332, 334 to 435, and 439 to 547; these read PQVS…TLSY, PIFI…TMDG, and KPTN…TPDA. Residues 806–823 traverse the membrane as a helical segment; it reads AGAVLLGVILVFIVLWVF. Topologically, residues 824 to 1462 are cytoplasmic; that stretch reads HHKKTKNELQ…LHHIAESTLD (639 aa). Tyrosine-protein phosphatase domains are found at residues 893-1156 and 1187-1450; these read FLRE…LLDT and LEVE…IINY. Residues C1097 and C1391 each act as phosphocysteine intermediate in the active site.

It belongs to the protein-tyrosine phosphatase family. Receptor class subfamily.

The protein resides in the membrane. It catalyses the reaction O-phospho-L-tyrosyl-[protein] + H2O = L-tyrosyl-[protein] + phosphate. Functionally, possible cell adhesion receptor. This is Tyrosine-protein phosphatase 69D (Ptp69D) from Drosophila melanogaster (Fruit fly).